The chain runs to 603 residues: NADH-quinone oxidoreductase subunit C/D (603 aa).

The interval 1–193 is NADH dehydrogenase I subunit C; it reads MVNNMTDLTA…DPFTLTKQKE (193 aa). The segment at 217–603 is NADH dehydrogenase I subunit D; the sequence is DFMFLNLGPN…IDFVMSDVDR (387 aa).

The protein in the N-terminal section; belongs to the complex I 30 kDa subunit family. This sequence in the C-terminal section; belongs to the complex I 49 kDa subunit family. NDH-1 is composed of 13 different subunits. Subunits NuoB, CD, E, F, and G constitute the peripheral sector of the complex.

Its subcellular location is the cell inner membrane. The catalysed reaction is a quinone + NADH + 5 H(+)(in) = a quinol + NAD(+) + 4 H(+)(out). Functionally, NDH-1 shuttles electrons from NADH, via FMN and iron-sulfur (Fe-S) centers, to quinones in the respiratory chain. The immediate electron acceptor for the enzyme in this species is believed to be ubiquinone. Couples the redox reaction to proton translocation (for every two electrons transferred, four hydrogen ions are translocated across the cytoplasmic membrane), and thus conserves the redox energy in a proton gradient. This chain is NADH-quinone oxidoreductase subunit C/D, found in Cronobacter sakazakii (strain ATCC BAA-894) (Enterobacter sakazakii).